The primary structure comprises 295 residues: HTH-type transcriptional regulator TfdS (295 aa).

The HTH lysR-type domain maps to 1 to 58 (MEFRQLRYFVAAAEEGNVGAAARRLHISQPPVTRQIHALEQHLGVLLFERSARGVQLT). The H-T-H motif DNA-binding region spans 18–37 (VGAAARRLHISQPPVTRQIH).

Belongs to the LysR transcriptional regulatory family.

The protein resides in the cytoplasm. Functionally, involved in the regulation of 3-chlorocatechol degradation. Transcriptional regulator of tfdB expression. Acts as a repressor in the absence of its effector (either 2-cis-chlorodiene lactone or chloromaleylacetate) but acts as an activator when its effector is present. In Cupriavidus pinatubonensis (strain JMP 134 / LMG 1197) (Cupriavidus necator (strain JMP 134)), this protein is HTH-type transcriptional regulator TfdS (tfdS).